We begin with the raw amino-acid sequence, 327 residues long: Probable cell division protein WhiA (327 aa).

Residues 277–310 constitute a DNA-binding region (H-T-H motif); that stretch reads EELGRLADPPMTKDAVAGRIRRLLSMADRKAKQD. Residues 304-327 form a disordered region; it reads DRKAKQDGIPDTESAVTPDLLEDA.

This sequence belongs to the WhiA family.

In terms of biological role, involved in cell division and chromosome segregation. The chain is Probable cell division protein WhiA from Mycolicibacterium vanbaalenii (strain DSM 7251 / JCM 13017 / BCRC 16820 / KCTC 9966 / NRRL B-24157 / PYR-1) (Mycobacterium vanbaalenii).